We begin with the raw amino-acid sequence, 254 residues long: uncharacterized protein (254 aa).

Positions 18, 37, 63, 90, 159, 163, 192, and 194 each coordinate NADP(+). Catalysis depends on Y159, which acts as the Proton donor. K163 (lowers pKa of active site Tyr) is an active-site residue.

Belongs to the short-chain dehydrogenases/reductases (SDR) family.

It localises to the cytoplasm. The protein resides in the nucleus. This is an uncharacterized protein from Schizosaccharomyces pombe (strain 972 / ATCC 24843) (Fission yeast).